A 290-amino-acid chain; its full sequence is Type II secretion system protein C (290 aa).

Over 1–28 the chain is Cytoplasmic; that stretch reads MTLPFRDDLLSSLLARCKTVPLSRFSQP. A helical membrane pass occupies residues 29–46; the sequence is LFWLLLLLLAHQCAGLTW. Residues 47–290 lie on the Periplasmic side of the membrane; sequence RLLDLGSQQS…LYDVYVGLSE (244 aa).

Belongs to the GSP C family.

The protein resides in the cell inner membrane. Its function is as follows. Involved in a type II secretion system (T2SS, formerly general secretion pathway, GSP) for the export of proteins. This Aeromonas salmonicida protein is Type II secretion system protein C (exeC).